The sequence spans 963 residues: Importin-13 (963 aa).

20 HEAT repeats span residues 24–54, 56–88, 95–135, 142–179, 194–231, 236–268, 276–325, 330–372, 375–438, 440–476, 487–522, 524–558, 562–600, 603–648, 676–716, 720–754, 761–803, 815–845, 860–893, and 897–931; these read ENVE…QAQA, PQAW…KISR, TDQY…LSMM, AVAD…EFQT, LAVE…SWVQ, LQDC…NAIS, VNTL…ALLD, WQSF…DDIL, EAEK…YEML, AELL…FQSI, VVPG…WLAD, PVMI…CREC, LPPY…LLSA, VEEI…SNLF, PVVV…VKTL, FAPM…VHIF, FPPI…ALKR, VKAV…TELL, EDGR…FALN, and FSLL…QQIL. One can recognise an Importin N-terminal domain in the interval 45–111; sequence AQKWLMQAQA…KAQLFTQITR (67 aa).

This sequence belongs to the importin beta family. Interacts with UBC9, RAN, RBM8A, eIF-1A and PAX6.

It localises to the cytoplasm. The protein localises to the nucleus. In terms of biological role, functions in nuclear protein import as nuclear transport receptor. Serves as receptor for nuclear localization signals (NLS) in cargo substrates. Is thought to mediate docking of the importin/substrate complex to the nuclear pore complex (NPC) through binding to nucleoporin and the complex is subsequently translocated through the pore by an energy requiring, Ran-dependent mechanism. At the nucleoplasmic side of the NPC, Ran binds to the importin, the importin/substrate complex dissociates and importin is re-exported from the nucleus to the cytoplasm where GTP hydrolysis releases Ran. The directionality of nuclear import is thought to be conferred by an asymmetric distribution of the GTP- and GDP-bound forms of Ran between the cytoplasm and nucleus. Mediates the nuclear import of UBC9, the RBM8A/MAGOH complex, PAX6 and probably other members of the paired homeobox family. Also mediates nuclear export of eIF-1A, and the cytoplasmic release of eIF-1A is triggered by the loading of import substrates onto IPO13. The protein is Importin-13 (IPO13) of Bos taurus (Bovine).